Reading from the N-terminus, the 193-residue chain is Potassium-transporting ATPase KdpC subunit (193 aa).

The chain crosses the membrane as a helical span at residues 14–34; it reads ITFTFLVLCGLVYPLIVTGIA.

This sequence belongs to the KdpC family. In terms of assembly, the system is composed of three essential subunits: KdpA, KdpB and KdpC.

The protein localises to the cell membrane. Part of the high-affinity ATP-driven potassium transport (or Kdp) system, which catalyzes the hydrolysis of ATP coupled with the electrogenic transport of potassium into the cytoplasm. This subunit acts as a catalytic chaperone that increases the ATP-binding affinity of the ATP-hydrolyzing subunit KdpB by the formation of a transient KdpB/KdpC/ATP ternary complex. This Bacillus cereus (strain Q1) protein is Potassium-transporting ATPase KdpC subunit.